Reading from the N-terminus, the 226-residue chain is MGIRAIVVDTAGTTTDLNFIQQTLFPYSAKVMADFLREHQHNPLVDYCIGDVRDIALETDADIDRVAEILVQWIAEDRKVTPLKTLQGLIWKQGYANDEFKGHIYPDFIDAIKTYRAQGLRVYSFSSGSVDAQKLLFSHSDSGDLTELFNGHFDTRTGNKLDKQAYANIVNTISLTPRQILFVSDVVEELKAAEAAGMITCQMVREPSQRTGKYRIIQSFSELNFE.

Belongs to the HAD-like hydrolase superfamily. MasA/MtnC family. As to quaternary structure, monomer. It depends on Mg(2+) as a cofactor.

The enzyme catalyses 5-methylsulfanyl-2,3-dioxopentyl phosphate + H2O = 1,2-dihydroxy-5-(methylsulfanyl)pent-1-en-3-one + phosphate. It functions in the pathway amino-acid biosynthesis; L-methionine biosynthesis via salvage pathway; L-methionine from S-methyl-5-thio-alpha-D-ribose 1-phosphate: step 3/6. Its pathway is amino-acid biosynthesis; L-methionine biosynthesis via salvage pathway; L-methionine from S-methyl-5-thio-alpha-D-ribose 1-phosphate: step 4/6. In terms of biological role, bifunctional enzyme that catalyzes the enolization of 2,3-diketo-5-methylthiopentyl-1-phosphate (DK-MTP-1-P) into the intermediate 2-hydroxy-3-keto-5-methylthiopentenyl-1-phosphate (HK-MTPenyl-1-P), which is then dephosphorylated to form the acireductone 1,2-dihydroxy-3-keto-5-methylthiopentene (DHK-MTPene). The polypeptide is Enolase-phosphatase E1 (Shewanella amazonensis (strain ATCC BAA-1098 / SB2B)).